We begin with the raw amino-acid sequence, 235 residues long: uncharacterized protein (235 aa).

Positions 1-24 (MSDRMKLKGLLAFCLLFLSSFVLA) are cleaved as a signal peptide.

This is an uncharacterized protein from Haemophilus influenzae (strain ATCC 51907 / DSM 11121 / KW20 / Rd).